The sequence spans 946 residues: RIPOR family member 3 (946 aa).

Phosphoserine is present on residues Ser9, Ser24, and Ser340. Residue Thr345 is modified to Phosphothreonine. Ser351 and Ser384 each carry phosphoserine. The interval 390-512 (GPSLRSQSQE…GDREDGPGVA (123 aa)) is disordered. A compositionally biased stretch (basic and acidic residues) spans 437–446 (SIEEEAREDP). The segment covering 478–495 (SLPQGSLFHSGTASSSQN) has biased composition (polar residues). Residues 496 to 508 (GHEEGATGDREDG) are compositionally biased toward basic and acidic residues.

It belongs to the RIPOR family.

The sequence is that of RIPOR family member 3 from Homo sapiens (Human).